The primary structure comprises 139 residues: Putative pre-16S rRNA nuclease (139 aa).

The protein belongs to the YqgF nuclease family.

It localises to the cytoplasm. Its function is as follows. Could be a nuclease involved in processing of the 5'-end of pre-16S rRNA. The chain is Putative pre-16S rRNA nuclease from Thermoanaerobacter pseudethanolicus (strain ATCC 33223 / 39E) (Clostridium thermohydrosulfuricum).